The sequence spans 584 residues: DNA ligase (584 aa).

Residue Glu249 participates in ATP binding. Lys251 serves as the catalytic N6-AMP-lysine intermediate. Arg256, Arg271, Glu301, Phe341, Arg416, and Lys422 together coordinate ATP.

Belongs to the ATP-dependent DNA ligase family. Requires Mg(2+) as cofactor.

It catalyses the reaction ATP + (deoxyribonucleotide)n-3'-hydroxyl + 5'-phospho-(deoxyribonucleotide)m = (deoxyribonucleotide)n+m + AMP + diphosphate.. Its function is as follows. DNA ligase that seals nicks in double-stranded DNA during DNA replication, DNA recombination and DNA repair. In Pyrobaculum arsenaticum (strain DSM 13514 / JCM 11321 / PZ6), this protein is DNA ligase.